The sequence spans 53 residues: uncharacterized protein (53 aa).

This is an uncharacterized protein from Plasmodium falciparum (isolate fcm17 / Senegal).